A 356-amino-acid chain; its full sequence is Nuclear hormone receptor family member nhr-169 (356 aa).

The segment at residues 16–90 (DPICSVCNFS…AGMKRSLVKE (75 aa)) is a DNA-binding region (nuclear receptor). 2 consecutive NR C4-type zinc fingers follow at residues 19–40 (CSVC…CSAC) and 56–72 (CKKD…CRAC). The NR LBD domain occupies 144-356 (DVSKILKTTP…KLYLHMGLPF (213 aa)).

This sequence belongs to the nuclear hormone receptor family.

The protein localises to the nucleus. Functionally, orphan nuclear receptor. In Caenorhabditis elegans, this protein is Nuclear hormone receptor family member nhr-169 (nhr-169).